Consider the following 49-residue polypeptide: Large ribosomal subunit protein bL33 (49 aa).

Belongs to the bacterial ribosomal protein bL33 family.

In Clostridium botulinum (strain ATCC 19397 / Type A), this protein is Large ribosomal subunit protein bL33.